The primary structure comprises 228 residues: ATP-dependent dethiobiotin synthetase BioD (228 aa).

ATP is bound at residue 12–17 (EIGKTT). Position 16 (threonine 16) interacts with Mg(2+). Residue lysine 37 is part of the active site. Serine 41 is a substrate binding site. ATP-binding positions include aspartate 54, 116–119 (EGAG), and 205–207 (PRL). Mg(2+)-binding residues include aspartate 54 and glutamate 116.

The protein belongs to the dethiobiotin synthetase family. As to quaternary structure, homodimer. The cofactor is Mg(2+).

It is found in the cytoplasm. It catalyses the reaction (7R,8S)-7,8-diammoniononanoate + CO2 + ATP = (4R,5S)-dethiobiotin + ADP + phosphate + 3 H(+). Its pathway is cofactor biosynthesis; biotin biosynthesis; biotin from 7,8-diaminononanoate: step 1/2. In terms of biological role, catalyzes a mechanistically unusual reaction, the ATP-dependent insertion of CO2 between the N7 and N8 nitrogen atoms of 7,8-diaminopelargonic acid (DAPA, also called 7,8-diammoniononanoate) to form a ureido ring. This is ATP-dependent dethiobiotin synthetase BioD from Pseudomonas aeruginosa (strain UCBPP-PA14).